The chain runs to 192 residues: Pyridoxal 5'-phosphate synthase subunit PdxT (192 aa).

47 to 49 (GES) contributes to the L-glutamine binding site. Cysteine 78 serves as the catalytic Nucleophile. L-glutamine contacts are provided by residues arginine 105 and 139–140 (IR). Residues histidine 175 and glutamate 177 each act as charge relay system in the active site.

The protein belongs to the glutaminase PdxT/SNO family. In the presence of PdxS, forms a dodecamer of heterodimers. Only shows activity in the heterodimer.

The enzyme catalyses aldehydo-D-ribose 5-phosphate + D-glyceraldehyde 3-phosphate + L-glutamine = pyridoxal 5'-phosphate + L-glutamate + phosphate + 3 H2O + H(+). It catalyses the reaction L-glutamine + H2O = L-glutamate + NH4(+). Its pathway is cofactor biosynthesis; pyridoxal 5'-phosphate biosynthesis. Functionally, catalyzes the hydrolysis of glutamine to glutamate and ammonia as part of the biosynthesis of pyridoxal 5'-phosphate. The resulting ammonia molecule is channeled to the active site of PdxS. The polypeptide is Pyridoxal 5'-phosphate synthase subunit PdxT (Solibacter usitatus (strain Ellin6076)).